A 206-amino-acid polypeptide reads, in one-letter code: Large ribosomal subunit protein uL4 (206 aa).

The disordered stretch occupies residues 43–78 (ARSGNRKQKDREEVKHTTKKPWRQKGTGRARAGMSS). The span at 49 to 58 (KQKDREEVKH) shows a compositional bias: basic and acidic residues. A compositionally biased stretch (basic residues) spans 59-70 (TTKKPWRQKGTG).

It belongs to the universal ribosomal protein uL4 family. Part of the 50S ribosomal subunit.

Its function is as follows. One of the primary rRNA binding proteins, this protein initially binds near the 5'-end of the 23S rRNA. It is important during the early stages of 50S assembly. It makes multiple contacts with different domains of the 23S rRNA in the assembled 50S subunit and ribosome. Functionally, forms part of the polypeptide exit tunnel. This is Large ribosomal subunit protein uL4 from Cupriavidus pinatubonensis (strain JMP 134 / LMG 1197) (Cupriavidus necator (strain JMP 134)).